A 948-amino-acid chain; its full sequence is Coatomer subunit beta-1 (948 aa).

HEAT repeat units lie at residues 49-87 (ETIP…TDSK), 92-126 (PEMI…MKET), 127-164 (EIVE…LPQG), 274-311 (TAIR…TLHR), 312-349 (DIMV…HHNI), and 391-428 (EVAS…TNPK).

In terms of assembly, oligomeric complex that consists of at least the alpha, beta, beta', gamma, delta, epsilon and zeta subunits.

Its subcellular location is the cytoplasm. It is found in the golgi apparatus membrane. The protein localises to the cytoplasmic vesicle. The protein resides in the COPI-coated vesicle membrane. Its function is as follows. The coatomer is a cytosolic protein complex that binds to dilysine motifs and reversibly associates with Golgi non-clathrin-coated vesicles, which further mediate biosynthetic protein transport from the ER, via the Golgi up to the trans Golgi network. Coatomer complex is required for budding from Golgi membranes, and is essential for the retrograde Golgi-to-ER transport of dilysine-tagged proteins. This is Coatomer subunit beta-1 from Arabidopsis thaliana (Mouse-ear cress).